A 598-amino-acid polypeptide reads, in one-letter code: Elongation factor 4 (598 aa).

Residues 2–183 enclose the tr-type G domain; it reads KHIRNFCIIA…AIIEKIPHPK (182 aa). Residues 14 to 19 and 130 to 133 contribute to the GTP site; these read DHGKST and NKVD.

Belongs to the TRAFAC class translation factor GTPase superfamily. Classic translation factor GTPase family. LepA subfamily.

It localises to the cell inner membrane. It carries out the reaction GTP + H2O = GDP + phosphate + H(+). In terms of biological role, required for accurate and efficient protein synthesis under certain stress conditions. May act as a fidelity factor of the translation reaction, by catalyzing a one-codon backward translocation of tRNAs on improperly translocated ribosomes. Back-translocation proceeds from a post-translocation (POST) complex to a pre-translocation (PRE) complex, thus giving elongation factor G a second chance to translocate the tRNAs correctly. Binds to ribosomes in a GTP-dependent manner. This Flavobacterium psychrophilum (strain ATCC 49511 / DSM 21280 / CIP 103535 / JIP02/86) protein is Elongation factor 4.